The following is a 427-amino-acid chain: 3-phosphoshikimate 1-carboxyvinyltransferase (427 aa).

3-phosphoshikimate is bound by residues lysine 20, serine 21, and arginine 25. Lysine 20 contributes to the phosphoenolpyruvate binding site. Phosphoenolpyruvate contacts are provided by glycine 92 and arginine 120. Positions 166, 168, 312, and 339 each coordinate 3-phosphoshikimate. Glutamine 168 lines the phosphoenolpyruvate pocket. The Proton acceptor role is filled by aspartate 312. Positions 343 and 385 each coordinate phosphoenolpyruvate.

The protein belongs to the EPSP synthase family. Monomer.

The protein localises to the cytoplasm. The catalysed reaction is 3-phosphoshikimate + phosphoenolpyruvate = 5-O-(1-carboxyvinyl)-3-phosphoshikimate + phosphate. Its pathway is metabolic intermediate biosynthesis; chorismate biosynthesis; chorismate from D-erythrose 4-phosphate and phosphoenolpyruvate: step 6/7. Functionally, catalyzes the transfer of the enolpyruvyl moiety of phosphoenolpyruvate (PEP) to the 5-hydroxyl of shikimate-3-phosphate (S3P) to produce enolpyruvyl shikimate-3-phosphate and inorganic phosphate. The chain is 3-phosphoshikimate 1-carboxyvinyltransferase from Streptococcus uberis (strain ATCC BAA-854 / 0140J).